A 415-amino-acid polypeptide reads, in one-letter code: Gamma-glutamyl phosphate reductase (415 aa).

It belongs to the gamma-glutamyl phosphate reductase family.

It is found in the cytoplasm. It catalyses the reaction L-glutamate 5-semialdehyde + phosphate + NADP(+) = L-glutamyl 5-phosphate + NADPH + H(+). It participates in amino-acid biosynthesis; L-proline biosynthesis; L-glutamate 5-semialdehyde from L-glutamate: step 2/2. Its function is as follows. Catalyzes the NADPH-dependent reduction of L-glutamate 5-phosphate into L-glutamate 5-semialdehyde and phosphate. The product spontaneously undergoes cyclization to form 1-pyrroline-5-carboxylate. The polypeptide is Gamma-glutamyl phosphate reductase (Bacteroides fragilis (strain YCH46)).